The sequence spans 1748 residues: RANBP2-like and GRIP domain-containing protein 1 (1748 aa).

Thr-14 bears the Phosphothreonine mark. TPR repeat units lie at residues Pro-51–Gln-84, Gln-575–Ile-608, and Glu-639–Trp-672. The interval Gly-751–Glu-796 is disordered. Residues Ser-769 to Pro-788 show a composition bias toward low complexity. A RanBD1 1 domain is found at His-1021–Asp-1157. Disordered regions lie at residues Thr-1198–Trp-1233 and Ala-1291–Gly-1316. The segment covering Ile-1220–Pro-1229 has biased composition (polar residues). The segment covering Thr-1302–Arg-1314 has biased composition (acidic residues). One can recognise a RanBD1 2 domain in the interval Tyr-1318–Lys-1454. Polar residues predominate over residues Asn-1565–Glu-1578. The interval Asn-1565 to Ser-1606 is disordered. The segment covering Ser-1579–Val-1602 has biased composition (basic and acidic residues). Positions Gln-1685–Val-1735 constitute a GRIP domain.

This chain is RANBP2-like and GRIP domain-containing protein 1 (RGPD1), found in Homo sapiens (Human).